Here is a 232-residue protein sequence, read N- to C-terminus: RNA chaperone ProQ (232 aa).

Residues 105-182 (EAKARVQAQR…REEQHTPVSD (78 aa)) form a disordered region. Composition is skewed to basic and acidic residues over residues 117 to 138 (QQAKKREAAAAAGEKEDAPPRE) and 147 to 177 (RRKEGAERKPRAQKPVEKAPKTVKAPREEQH).

It belongs to the ProQ family.

It is found in the cytoplasm. In terms of biological role, RNA chaperone with significant RNA binding, RNA strand exchange and RNA duplexing activities. May regulate ProP activity through an RNA-based, post-transcriptional mechanism. The polypeptide is RNA chaperone ProQ (Escherichia coli O139:H28 (strain E24377A / ETEC)).